Here is a 332-residue protein sequence, read N- to C-terminus: Cytochrome c1, heme protein, mitochondrial (332 aa).

A mitochondrion-targeting transit peptide spans 1-70 (MLARTCLRST…YYHLYGFASA (70 aa)). Residues 71 to 277 (MTPAEEGLHA…AEPEMDDRKR (207 aa)) lie on the Mitochondrial intermembrane side of the membrane. Residues 97-250 (QALRRGFQVY…GLVDYEDGTP (154 aa)) form the Cytochrome c domain. The heme c site is built by C110, C113, and H114. The span at 139 to 151 (EENEYDTEPNDQG) shows a compositional bias: acidic residues. The interval 139-162 (EENEYDTEPNDQGEIEKRPGKLSD) is disordered. Residue M234 coordinates heme c. A helical membrane pass occupies residues 278-296 (MGMKVLVVTSVLFALSVYV). Residues 297 to 332 (KRYKWAWLKSRKIVYDPPKSPPPATNLALPQQRAKS) lie on the Mitochondrial matrix side of the membrane.

This sequence belongs to the cytochrome c family. Component of the ubiquinol-cytochrome c oxidoreductase (cytochrome b-c1 complex, complex III, CIII), a multisubunit enzyme composed of 10 subunits. The complex is composed of 3 respiratory subunits cytochrome b (cob), cytochrome c1 (cyt-1) and Rieske protein (fes-1), 2 core protein subunits pep and ucr-1, and 5 low-molecular weight protein subunits qcr6, qcr7, qcr8, qcr9 and probably NCU16844/qcr10. The complex exists as an obligatory dimer and forms supercomplexes (SCs) in the inner mitochondrial membrane with NADH-ubiquinone oxidoreductase (complex I, CI) and cytochrome c oxidase (complex IV, CIV), resulting in different assemblies (supercomplexes SCI(1)III(2), SCIII(2)IV(1) and SCIII(2)IV(2) as well as higher order I(x)III(y)IV(z) megacomplexes). Heme c serves as cofactor.

It is found in the mitochondrion inner membrane. It catalyses the reaction a quinol + 2 Fe(III)-[cytochrome c](out) = a quinone + 2 Fe(II)-[cytochrome c](out) + 2 H(+)(out). Component of the ubiquinol-cytochrome c oxidoreductase, a multisubunit transmembrane complex that is part of the mitochondrial electron transport chain which drives oxidative phosphorylation. The respiratory chain contains 3 multisubunit complexes succinate dehydrogenase (complex II, CII), ubiquinol-cytochrome c oxidoreductase (cytochrome b-c1 complex, complex III, CIII) and cytochrome c oxidase (complex IV, CIV), that cooperate to transfer electrons derived from NADH and succinate to molecular oxygen, creating an electrochemical gradient over the inner membrane that drives transmembrane transport and the ATP synthase. The cytochrome b-c1 complex catalyzes electron transfer from ubiquinol to cytochrome c, linking this redox reaction to translocation of protons across the mitochondrial inner membrane, with protons being carried across the membrane as hydrogens on the quinol. In the process called Q cycle, 2 protons are consumed from the matrix, 4 protons are released into the intermembrane space and 2 electrons are passed to cytochrome c. Cytochrome c1 is a catalytic core subunit containing a c-type heme. It transfers electrons from the [2Fe-2S] iron-sulfur cluster of the Rieske protein to cytochrome c. The sequence is that of Cytochrome c1, heme protein, mitochondrial (cyt-1) from Neurospora crassa (strain ATCC 24698 / 74-OR23-1A / CBS 708.71 / DSM 1257 / FGSC 987).